The sequence spans 331 residues: Cytoplasmic envelopment protein 1 (331 aa).

The protein belongs to the herpesviridae cytoplasmic envelopment protein 1 family. Interacts with protein ORF7; this interaction localizes protein ORF53 to the host trans-Golgi network (TGN).

The protein localises to the virion. It localises to the virion tegument. Its subcellular location is the host cytoplasm. The protein resides in the host Golgi apparatus. In terms of biological role, plays a critical role in cytoplasmic virus egress. Participates in the final step of tegumentation and envelope acquisition within the host cytoplasm. The sequence is that of Cytoplasmic envelopment protein 1 (ORF53) from Varicella-zoster virus (strain Dumas) (HHV-3).